The chain runs to 144 residues: Large ribosomal subunit protein uL16 (144 aa).

It belongs to the universal ribosomal protein uL16 family. Part of the 50S ribosomal subunit.

Functionally, binds 23S rRNA and is also seen to make contacts with the A and possibly P site tRNAs. The polypeptide is Large ribosomal subunit protein uL16 (Clostridium botulinum (strain Alaska E43 / Type E3)).